We begin with the raw amino-acid sequence, 512 residues long: Cytochrome P450 monooxygenase astB (512 aa).

Residues Asp5 to Ala25 form a helical membrane-spanning segment. Cys452 is a binding site for heme.

The protein belongs to the cytochrome P450 family. Heme is required as a cofactor.

The protein resides in the membrane. It participates in secondary metabolite biosynthesis; terpenoid biosynthesis. Cytochrome P450 monooxygenase; part of the gene cluster that mediates the biosynthesis of the sesquiterpenoid aspterric acid (AA), an inhibitor of dihydroxy-acid dehydratase (DHAD) effective as an herbicide. AstB catalyzes the second step within the pathway and converts (-)-daucane produced by the terpene cyclase astA into an alpha-epoxy carboxylate intermediate which is further converted into the tricyclic aspterric acid by the cytochrome P450 monooxygenase astC. The polypeptide is Cytochrome P450 monooxygenase astB (Aspergillus terreus (strain NIH 2624 / FGSC A1156)).